The primary structure comprises 508 residues: ATP synthase subunit alpha, mitochondrial (508 aa).

171–178 is an ATP binding site; it reads GDRQTGKT.

This sequence belongs to the ATPase alpha/beta chains family. F-type ATPases have 2 components, CF(1) - the catalytic core - and CF(0) - the membrane proton channel. CF(1) has five subunits: alpha(3), beta(3), gamma(1), delta(1), epsilon(1). CF(0) has three main subunits: a, b and c.

The protein localises to the mitochondrion. Its subcellular location is the mitochondrion inner membrane. In terms of biological role, mitochondrial membrane ATP synthase (F(1)F(0) ATP synthase or Complex V) produces ATP from ADP in the presence of a proton gradient across the membrane which is generated by electron transport complexes of the respiratory chain. F-type ATPases consist of two structural domains, F(1) - containing the extramembraneous catalytic core, and F(0) - containing the membrane proton channel, linked together by a central stalk and a peripheral stalk. During catalysis, ATP synthesis in the catalytic domain of F(1) is coupled via a rotary mechanism of the central stalk subunits to proton translocation. Subunits alpha and beta form the catalytic core in F(1). Rotation of the central stalk against the surrounding alpha(3)beta(3) subunits leads to hydrolysis of ATP in three separate catalytic sites on the beta subunits. Subunit alpha does not bear the catalytic high-affinity ATP-binding sites. In Phaseolus vulgaris (Kidney bean), this protein is ATP synthase subunit alpha, mitochondrial (ATPA).